The chain runs to 309 residues: Homoserine O-succinyltransferase (309 aa).

The active-site Acyl-thioester intermediate is the Cys-142. The substrate site is built by Lys-163 and Ser-192. The Proton acceptor role is filled by His-235. The active site involves Glu-237. Substrate is bound at residue Arg-249.

Belongs to the MetA family.

The protein localises to the cytoplasm. It catalyses the reaction L-homoserine + succinyl-CoA = O-succinyl-L-homoserine + CoA. Its pathway is amino-acid biosynthesis; L-methionine biosynthesis via de novo pathway; O-succinyl-L-homoserine from L-homoserine: step 1/1. In terms of biological role, transfers a succinyl group from succinyl-CoA to L-homoserine, forming succinyl-L-homoserine. This Citrobacter koseri (strain ATCC BAA-895 / CDC 4225-83 / SGSC4696) protein is Homoserine O-succinyltransferase.